The chain runs to 463 residues: MFS-type transporter criB (463 aa).

11 helical membrane-spanning segments follow: residues 5–27, 46–66, 83–103, 106–126, 141–161, 168–188, 256–276, 293–313, 323–343, 355–375, and 402–422; these read LVLSCGVIAGISGFLFGYDSGIM, MVGTIVAIMQAGGFFGCLTAG, VFVVVGGALQAAAYHTAMLLI, LVTGFGVGSLTMTVPVYQAEI, LMLAIGSAIANWTGYGCSFVN, MPLALQAVPGIVLFFGSYFLP, LFLGAGIWLMLNLTGINVINY, IFLSGVYGSVGAATTFLALFF, LMMANISQTATLIVMAGLTAA, VAMIFLFFVIYCSTWGPLSWV, and FYFLFVATNFISALVLLFLYP.

This sequence belongs to the major facilitator superfamily. Sugar transporter (TC 2.A.1.1) family.

It is found in the membrane. Functionally, MFS-type transporter; part of the gene cluster that mediates the biosynthesis of echinulin family alkaloid. This is MFS-type transporter criB from Aspergillus cristatus (Chinese Fuzhuan brick tea-fermentation fungus).